A 156-amino-acid chain; its full sequence is ATP synthase subunit b (156 aa).

A helical transmembrane segment spans residues 7–29 (LLGQAISFALFVWFCMKYVWPPL).

It belongs to the ATPase B chain family. F-type ATPases have 2 components, F(1) - the catalytic core - and F(0) - the membrane proton channel. F(1) has five subunits: alpha(3), beta(3), gamma(1), delta(1), epsilon(1). F(0) has three main subunits: a(1), b(2) and c(10-14). The alpha and beta chains form an alternating ring which encloses part of the gamma chain. F(1) is attached to F(0) by a central stalk formed by the gamma and epsilon chains, while a peripheral stalk is formed by the delta and b chains.

The protein resides in the cell inner membrane. In terms of biological role, f(1)F(0) ATP synthase produces ATP from ADP in the presence of a proton or sodium gradient. F-type ATPases consist of two structural domains, F(1) containing the extramembraneous catalytic core and F(0) containing the membrane proton channel, linked together by a central stalk and a peripheral stalk. During catalysis, ATP synthesis in the catalytic domain of F(1) is coupled via a rotary mechanism of the central stalk subunits to proton translocation. Its function is as follows. Component of the F(0) channel, it forms part of the peripheral stalk, linking F(1) to F(0). In Vibrio alginolyticus, this protein is ATP synthase subunit b.